The primary structure comprises 295 residues: Phosphoribosylaminoimidazole-succinocarboxamide synthase (295 aa).

Belongs to the SAICAR synthetase family.

It catalyses the reaction 5-amino-1-(5-phospho-D-ribosyl)imidazole-4-carboxylate + L-aspartate + ATP = (2S)-2-[5-amino-1-(5-phospho-beta-D-ribosyl)imidazole-4-carboxamido]succinate + ADP + phosphate + 2 H(+). It functions in the pathway purine metabolism; IMP biosynthesis via de novo pathway; 5-amino-1-(5-phospho-D-ribosyl)imidazole-4-carboxamide from 5-amino-1-(5-phospho-D-ribosyl)imidazole-4-carboxylate: step 1/2. The protein is Phosphoribosylaminoimidazole-succinocarboxamide synthase of Corynebacterium ammoniagenes (Brevibacterium ammoniagenes).